We begin with the raw amino-acid sequence, 396 residues long: Purine ribonucleoside efflux pump NepI (396 aa).

Topologically, residues 1–21 (MSEFIAENRGADAITRPNWSA) are cytoplasmic. A helical membrane pass occupies residues 22-42 (VFSVAFCVACLIIVEFLPVSL). Over 43–54 (LTPMAQDLGISE) the chain is Periplasmic. A helical membrane pass occupies residues 55–75 (GVAGQSVTVTAFVAMFASLFI). The Cytoplasmic portion of the chain corresponds to 76 to 85 (TQTIQATDRR). A helical membrane pass occupies residues 86–106 (YVVILFAVLLTLSCLLVSFAN). A topological domain (periplasmic) is located at residue Ser-107. A helical membrane pass occupies residues 108 to 128 (FSLLLIGRACLGLALGGFWAM). Residues 129-147 (SASLTMRLVPPRTVPKALS) lie on the Cytoplasmic side of the membrane. Residues 148 to 168 (VIFGAVSIALVIAAPLGCFLG) traverse the membrane as a helical segment. The Periplasmic segment spans residues 169–175 (ELIGWRN). Residues 176–196 (VFNAAAAMGVLCIFWIIKSLP) form a helical membrane-spanning segment. The Cytoplasmic segment spans residues 197 to 215 (SLPGEPSHQKQNTFRLLQR). Residues 216–236 (PGVMAGMIAIFMSFAGQFAFF) traverse the membrane as a helical segment. The Periplasmic segment spans residues 237–255 (TYIRPVYMTLAGFGVDGLT). Residues 256 to 276 (LVLLSFGIASFVGTSLSSFIL) form a helical membrane-spanning segment. At 277 to 281 (KRSVK) the chain is on the cytoplasmic side. A helical membrane pass occupies residues 282 to 302 (LALAGAPFVLALSALVLTLWG). At 303-305 (SDK) the chain is on the periplasmic side. The helical transmembrane segment at 306–326 (IVATGVAIIWGLTFALIPVGW) threads the bilayer. The Cytoplasmic segment spans residues 327–343 (STWITRSLADQAEKAGS). Residues 344–364 (IQVAVIQLANTCGAAIGGYAL) form a helical membrane-spanning segment. Residues 365 to 366 (DN) lie on the Periplasmic side of the membrane. The helical transmembrane segment at 367–387 (IGLTSPLMLSGTLMLLTALLV) threads the bilayer. Topologically, residues 388–396 (TAKVKMKKS) are cytoplasmic.

It belongs to the major facilitator superfamily. DHA1 family. NepI (TC 2.A.1.2.26) subfamily.

The protein localises to the cell inner membrane. The enzyme catalyses inosine(in) + H(+)(out) = inosine(out) + H(+)(in). It carries out the reaction guanosine(in) + H(+)(out) = guanosine(out) + H(+)(in). In terms of biological role, involved in the efflux of purine ribonucleosides, such as inosine and guanosine. In Escherichia coli O157:H7, this protein is Purine ribonucleoside efflux pump NepI.